The sequence spans 560 residues: Putative transport protein VV1438 (560 aa).

The next 5 helical transmembrane spans lie at 5–25 (VVLL…AIGL), 37–57 (LGNS…GFSF), 66–86 (FMLF…GIFF), 91–111 (HYFT…YFAS), and 164–184 (VGYA…AKLL). 2 consecutive RCK C-terminal domains span residues 203 to 292 (RGLG…FRNG) and 293 to 376 (KEVF…RIGF). Helical transmembrane passes span 386–406 (LLAF…TMTF), 409–429 (VSFS…LGFL), 443–463 (ALNM…GLSA), 478–498 (IIGI…LVGA), 506–526 (ALLF…DIVN), and 539–559 (AGTY…LIIL).

Belongs to the AAE transporter (TC 2.A.81) family. YbjL subfamily.

The protein localises to the cell membrane. The chain is Putative transport protein VV1438 from Vibrio vulnificus (strain YJ016).